Reading from the N-terminus, the 85-residue chain is Alpha-toxin Amm8 (85 aa).

The N-terminal stretch at 1 to 19 (MNYLVMISLALLFMTGVES) is a signal peptide. One can recognise an LCN-type CS-alpha/beta domain in the interval 21–83 (KDGYIVNDIN…VRTKGPGRCN (63 aa)). Intrachain disulfides connect C31-C82, C35-C55, C41-C65, and C45-C67. Position 85 (R85) is a propeptide, removed by a carboxypeptidase.

This sequence belongs to the long (4 C-C) scorpion toxin superfamily. Sodium channel inhibitor family. Alpha subfamily. As to expression, expressed by the venom gland.

Its subcellular location is the secreted. Its function is as follows. Alpha toxins bind voltage-independently at site-3 of sodium channels (Nav) and inhibit the inactivation of the activated channels, thereby blocking neuronal transmission. The toxin principally slows the inactivation process of TTX-sensitive sodium channels. It discriminates neuronal versus muscular sodium channel, as it is more potent on rat brain Nav1.2/SCN2A (EC(50)=29 nM) than on rat skeletal muscle Nav1.4/SCN4A (EC(50)=416 nM). It also shows a weak activity on Nav1.7/SCN9A (EC(50)=1.76 uM). In vivo, the toxin produces pain hypersensibility to mechanical and thermal stimuli. It also exhibits potent analgesic activity (when injected intraperitoneally), increasing hot plate and tail flick withdrawal latencies in a dose-dependent fashion. This paradoxical analgesic action, is significantly suppressed by opioid receptor antagonists, suggesting a pain-induced analgesia mechanism that involves an endogenous opioid system. This led to hypothesis that pain relief induced by peripheral administration of Amm VIII may result from sensitization of primary afferent neurons and subsequent activation of an opioid-dependent noxious inhibitory control. The protein is Alpha-toxin Amm8 of Androctonus mauritanicus mauritanicus (Scorpion).